A 239-amino-acid polypeptide reads, in one-letter code: Phosphothreonine lyase OspF (239 aa).

Histidine 104 (proton donor) is an active-site residue. The active-site Proton acceptor is lysine 134.

The protein belongs to the phosphothreonine lyase family.

Its subcellular location is the secreted. In terms of biological role, catalyzes the removal of the phosphate group from the phosphothreonine in the mitogen-activated protein kinases p38, phosphothreonine in the mitogen-activated protein kinases such as MAPK2/ERK2, MAPK3/ERK1, MAPK8 and MAPK14 in an irreversible reaction, thus preventing the downstream phosphorylation of histone H3. This epigenetic modification results in inhibition of the transcription of a specific subset of pro-inflammatory genes, and ultimately to a reduced immune response against the invading pathogen. The diminished immune response enhances the bacterium's ability to disseminate and multiply within the host. This Shigella boydii serotype 4 (strain Sb227) protein is Phosphothreonine lyase OspF (ospF).